The chain runs to 567 residues: Diacylglycerol kinase epsilon (567 aa).

The helical transmembrane segment at 22 to 42 (LILWTLCSVLLPVFITFWCSL) threads the bilayer. 2 consecutive Phorbol-ester/DAG-type zinc fingers follow at residues 59–108 (KHGW…RFQC) and 124–177 (PHHW…NEKC). Residues 215–356 (KQWTPLIILA…LDRWKVQVTN (142 aa)) form the DAGKc domain.

The protein belongs to the eukaryotic diacylglycerol kinase family. Expressed predominantly in testis. Expressed in endothelium, platelets and podocytes (at protein level).

The protein resides in the membrane. It is found in the cytoplasm. The catalysed reaction is a 1,2-diacyl-sn-glycerol + ATP = a 1,2-diacyl-sn-glycero-3-phosphate + ADP + H(+). The enzyme catalyses 1-hexadecanoyl-2-(5Z,8Z,11Z,14Z-eicosatetraenoyl)-sn-glycerol + ATP = 1-hexadecanoyl-2-(5Z,8Z,11Z,14Z-eicosatetraenoyl)-sn-glycero-3-phosphate + ADP + H(+). It catalyses the reaction 1-octadecanoyl-2-(5Z,8Z,11Z,14Z-eicosatetraenoyl)-sn-glycerol + ATP = 1-octadecanoyl-2-(5Z,8Z,11Z,14Z-eicosatetraenoyl)-sn-glycero-3-phosphate + ADP + H(+). It carries out the reaction 1-eicosanoyl-2-(5Z,8Z,11Z,14Z)-eicosatetraenoyl-sn-glycerol + ATP = 1-eicosanoyl-2-(5Z,8Z,11Z,14Z)-eicosatetraenoyl-sn-glycero-3-phosphate + ADP + H(+). The catalysed reaction is 1,2-di-(5Z,8Z,11Z,14Z)-eicosatetraenoyl-sn-glycerol + ATP = 1,2-di-(5Z,8Z,11Z,14Z)-eicosatetraenoyl-sn-glycero-3-phosphate + ADP + H(+). The enzyme catalyses 1-octadecanoyl-2-(9Z,12Z)-octadecadienoyl-sn-glycerol + ATP = 1-octadecanoyl-2-(9Z,12Z-octadecadienoyl)-sn-glycero-3-phosphate + ADP + H(+). It catalyses the reaction 1,2-di-(9Z,12Z-octadecadienoyl)-sn-glycerol + ATP = 1,2-di-(9Z,12Z-octadecadienoyl)-sn-glycero-3-phosphate + ADP + H(+). It carries out the reaction 1,2-di-(9Z-octadecenoyl)-sn-glycerol + ATP = 1,2-di-(9Z-octadecenoyl)-sn-glycero-3-phosphate + ADP + H(+). The protein operates within lipid metabolism; glycerolipid metabolism. Its activity is regulated as follows. Undergoes competitive inhibition by its own product 1,2-diacyl-sn-glycero-3-phosphate/phosphatidic acid. The strongest inhibition being observed in vitro with 1-octadecanoyl-2-(5Z,8Z,11Z,14Z-eicosatetraenoyl)-sn-glycero-3-phosphate, a major intermediate in the phosphatidylinositol turnover cycle and more generally by diacylglycerols with an arachidonoyl acyl chain at the sn-2 position. Its function is as follows. Membrane-bound diacylglycerol kinase that converts diacylglycerol/DAG into phosphatidic acid/phosphatidate/PA and regulates the respective levels of these two bioactive lipids. Thereby, acts as a central switch between the signaling pathways activated by these second messengers with different cellular targets and opposite effects in numerous biological processes. Also plays an important role in the biosynthesis of complex lipids. Displays specificity for diacylglycerol substrates with an arachidonoyl acyl chain at the sn-2 position, with the highest activity toward 1-octadecanoyl-2-(5Z,8Z,11Z,14Z-eicosatetraenoyl)-sn-glycerol the main diacylglycerol intermediate within the phosphatidylinositol turnover cycle. Can also phosphorylate diacylglycerol substrates with a linoleoyl acyl chain at the sn-2 position but much less efficiently. This Homo sapiens (Human) protein is Diacylglycerol kinase epsilon (DGKE).